Consider the following 203-residue polypeptide: Glycerol-3-phosphate acyltransferase (203 aa).

Helical transmembrane passes span 13–33 (TLAC…LILT), 66–86 (TLLL…LWGV), 88–108 (AGMA…WLSF), 118–138 (IGVL…AWLA), and 156–176 (IIPV…FAVM).

This sequence belongs to the PlsY family. As to quaternary structure, probably interacts with PlsX.

Its subcellular location is the cell inner membrane. The catalysed reaction is an acyl phosphate + sn-glycerol 3-phosphate = a 1-acyl-sn-glycero-3-phosphate + phosphate. It participates in lipid metabolism; phospholipid metabolism. Functionally, catalyzes the transfer of an acyl group from acyl-phosphate (acyl-PO(4)) to glycerol-3-phosphate (G3P) to form lysophosphatidic acid (LPA). This enzyme utilizes acyl-phosphate as fatty acyl donor, but not acyl-CoA or acyl-ACP. The chain is Glycerol-3-phosphate acyltransferase from Sinorhizobium medicae (strain WSM419) (Ensifer medicae).